Here is an 82-residue protein sequence, read N- to C-terminus: Small ribosomal subunit protein bS16 (82 aa).

Belongs to the bacterial ribosomal protein bS16 family.

This Shewanella sp. (strain ANA-3) protein is Small ribosomal subunit protein bS16.